The primary structure comprises 372 residues: Erythronate-4-phosphate dehydrogenase (372 aa).

Substrate contacts are provided by S45 and T66. Residue D146 participates in NAD(+) binding. The active site involves R209. An NAD(+)-binding site is contributed by D233. E238 is a catalytic residue. H255 (proton donor) is an active-site residue. G258 is an NAD(+) binding site. Y259 is a binding site for substrate.

It belongs to the D-isomer specific 2-hydroxyacid dehydrogenase family. PdxB subfamily. In terms of assembly, homodimer.

The protein localises to the cytoplasm. The catalysed reaction is 4-phospho-D-erythronate + NAD(+) = (R)-3-hydroxy-2-oxo-4-phosphooxybutanoate + NADH + H(+). Its pathway is cofactor biosynthesis; pyridoxine 5'-phosphate biosynthesis; pyridoxine 5'-phosphate from D-erythrose 4-phosphate: step 2/5. In terms of biological role, catalyzes the oxidation of erythronate-4-phosphate to 3-hydroxy-2-oxo-4-phosphonooxybutanoate. The protein is Erythronate-4-phosphate dehydrogenase of Blochmanniella floridana.